The following is a 199-amino-acid chain: Pyridoxine/pyridoxamine 5'-phosphate oxidase (199 aa).

FMN is bound by residues Arg-44 to Lys-49, Tyr-59 to Ser-60, Lys-66, and Gln-91. Lys-49 is a substrate binding site. Substrate is bound by residues Tyr-109, Arg-113, and Ser-117. Residues Gln-126–Ser-127 and Trp-171 each bind FMN. Position 177–179 (Arg-177–His-179) interacts with substrate. Arg-181 contributes to the FMN binding site.

This sequence belongs to the pyridoxamine 5'-phosphate oxidase family. As to quaternary structure, homodimer. The cofactor is FMN.

The enzyme catalyses pyridoxamine 5'-phosphate + O2 + H2O = pyridoxal 5'-phosphate + H2O2 + NH4(+). It catalyses the reaction pyridoxine 5'-phosphate + O2 = pyridoxal 5'-phosphate + H2O2. It functions in the pathway cofactor metabolism; pyridoxal 5'-phosphate salvage; pyridoxal 5'-phosphate from pyridoxamine 5'-phosphate: step 1/1. It participates in cofactor metabolism; pyridoxal 5'-phosphate salvage; pyridoxal 5'-phosphate from pyridoxine 5'-phosphate: step 1/1. In terms of biological role, catalyzes the oxidation of either pyridoxine 5'-phosphate (PNP) or pyridoxamine 5'-phosphate (PMP) into pyridoxal 5'-phosphate (PLP). In Xanthomonas oryzae pv. oryzae (strain KACC10331 / KXO85), this protein is Pyridoxine/pyridoxamine 5'-phosphate oxidase.